The chain runs to 241 residues: MWMHKKILLKLSGESLKGDSSYGIDPRTIKKIAWEIKEIKDLGVKIAIIVGAGNLWRGRTGEELGMDRSQADYMGMLGTIMNSLALQDALEQTNTITRVMTAFPVSSVAEPYIRRKAIRHLEKDRVVILGAGAGSPYFSTDTAAALRAAELNIDVILMAKNNIEGVYNKDPKKYQDAVLIKHIKHQQILSQRLAVMDITAASLCLENNIDILVFNMLKKGNIKKVVLKEGNIGTVISSKGE.

ATP contacts are provided by residues 10-13, glycine 53, and arginine 57; that span reads KLSG. UMP is bound by residues aspartate 72 and 133 to 140; that span reads AGSPYFST. ATP contacts are provided by asparagine 161, tyrosine 167, and aspartate 170.

Belongs to the UMP kinase family. In terms of assembly, homohexamer.

It localises to the cytoplasm. It catalyses the reaction UMP + ATP = UDP + ADP. The protein operates within pyrimidine metabolism; CTP biosynthesis via de novo pathway; UDP from UMP (UMPK route): step 1/1. Its activity is regulated as follows. Inhibited by UTP. Catalyzes the reversible phosphorylation of UMP to UDP. This chain is Uridylate kinase, found in Aster yellows witches'-broom phytoplasma (strain AYWB).